The chain runs to 312 residues: Very-long-chain 3-oxoacyl-CoA reductase (312 aa).

Residues Ala-4–Leu-24 form a helical membrane-spanning segment. Gly-50–Leu-79 provides a ligand contact to NADP(+). 2 helical membrane-spanning segments follow: residues Gly-182–Tyr-202 and Gly-271–Phe-291. Ser-189 contacts substrate. The Proton acceptor role is filled by Tyr-202. The short motif at Lys-308–Asn-312 is the Di-lysine motif element.

This sequence belongs to the short-chain dehydrogenases/reductases (SDR) family. 17-beta-HSD 3 subfamily.

The protein localises to the endoplasmic reticulum membrane. The enzyme catalyses a very-long-chain (3R)-3-hydroxyacyl-CoA + NADP(+) = a very-long-chain 3-oxoacyl-CoA + NADPH + H(+). It catalyses the reaction 17beta-estradiol + NAD(+) = estrone + NADH + H(+). It carries out the reaction 17beta-estradiol + NADP(+) = estrone + NADPH + H(+). The catalysed reaction is 3-oxooctadecanoyl-CoA + NADPH + H(+) = (3R)-hydroxyoctadecanoyl-CoA + NADP(+). The enzyme catalyses (7Z,10Z,13Z,16Z)-3-oxodocosatetraenoyl-CoA + NADPH + H(+) = (3R)-hydroxy-(7Z,10Z,13Z,16Z)-docosatetraenoyl-CoA + NADP(+). It catalyses the reaction 3-oxo-(7Z,10Z,13Z,16Z,19Z)-docosapentaenoyl-CoA + NADPH + H(+) = (3R)-hydroxy-(7Z,10Z,13Z,16Z,19Z)-docosapentaenoyl-CoA + NADP(+). It carries out the reaction (8Z,11Z,14Z)-3-oxoeicosatrienoyl-CoA + NADPH + H(+) = (3R)-hydroxy-(8Z,11Z,14Z)-eicosatrienoyl-CoA + NADP(+). It participates in lipid metabolism; fatty acid biosynthesis. Its pathway is steroid biosynthesis; estrogen biosynthesis. Its function is as follows. Catalyzes the second of the four reactions of the long-chain fatty acids elongation cycle. This endoplasmic reticulum-bound enzymatic process, allows the addition of two carbons to the chain of long- and very long-chain fatty acids/VLCFAs per cycle. This enzyme has a 3-ketoacyl-CoA reductase activity, reducing 3-ketoacyl-CoA to 3-hydroxyacyl-CoA, within each cycle of fatty acid elongation. Thereby, it may participate in the production of VLCFAs of different chain lengths that are involved in multiple biological processes as precursors of membrane lipids and lipid mediators. May also catalyze the transformation of estrone (E1) into estradiol (E2) and play a role in estrogen formation. The protein is Very-long-chain 3-oxoacyl-CoA reductase of Rattus norvegicus (Rat).